Reading from the N-terminus, the 358-residue chain is Fructose-bisphosphate aldolase 5, cytosolic (358 aa).

At Ser2 the chain carries N-acetylserine. Arg39 provides a ligand contact to substrate. Cys68 is subject to S-glutathionyl cysteine; transient. Cys173 bears the S-glutathionyl cysteine; transient; alternate mark. Cys173 carries the S-nitrosocysteine; transient; alternate modification. Glu183 functions as the Proton acceptor in the catalytic mechanism. Lys225 functions as the Schiff-base intermediate with dihydroxyacetone-P in the catalytic mechanism. Substrate contacts are provided by residues 266–268 (SGG) and Arg298. Position 350 is a phosphoserine (Ser350).

Belongs to the class I fructose-bisphosphate aldolase family. As to quaternary structure, homotetramer. Interacts with TRX3. Post-translationally, S-glutathionylated at Cys-68 and Cys-173. S-nitrosylated at Cys-173. In terms of tissue distribution, expressed in rosette leaves and cauline leaves.

The protein localises to the cytoplasm. Its subcellular location is the cytosol. The enzyme catalyses beta-D-fructose 1,6-bisphosphate = D-glyceraldehyde 3-phosphate + dihydroxyacetone phosphate. It functions in the pathway carbohydrate degradation; glycolysis; D-glyceraldehyde 3-phosphate and glycerone phosphate from D-glucose: step 4/4. Fructose-bisphosphate aldolase that plays a key role in glycolysis and gluconeogenesis. In Arabidopsis thaliana (Mouse-ear cress), this protein is Fructose-bisphosphate aldolase 5, cytosolic.